We begin with the raw amino-acid sequence, 266 residues long: Protein PYRICULARIA ORYZAE RESISTANCE 21 (266 aa).

The HMA domain occupies 1 to 68 (MGILVILVDL…IWCKAGKIIK (68 aa)). The a metal cation site is built by cysteine 12 and cysteine 15. Residues 129–156 (CEKPKPCEKPPPCKPEEPPKPPPEKPPP) form a disordered region. Basic and acidic residues predominate over residues 142–156 (KPEEPPKPPPEKPPP).

In terms of biological role, involved in defense responses. Contributes to slowing defense responses toward Magnaporthe oryzae. The chain is Protein PYRICULARIA ORYZAE RESISTANCE 21 from Oryza sativa subsp. japonica (Rice).